We begin with the raw amino-acid sequence, 209 residues long: uncharacterized protein (209 aa).

A compositionally biased stretch (basic and acidic residues) spans 1–11 (MMRTNAGKETK). The disordered stretch occupies residues 1-20 (MMRTNAGKETKGYNPAPADS).

This is an uncharacterized protein from Caenorhabditis elegans.